Here is a 234-residue protein sequence, read N- to C-terminus: Zinc transport system ATP-binding protein AdcC (234 aa).

Positions 4 to 234 (ITVEDLSFYY…HENGQEVGHA (231 aa)) constitute an ABC transporter domain. An ATP-binding site is contributed by 36–43 (GENGAAKT).

The protein belongs to the ABC transporter superfamily.

Part of the ATP-driven transport system AdcABC for zinc. Required for transformability. This is Zinc transport system ATP-binding protein AdcC (adcC) from Streptococcus pneumoniae (strain ATCC BAA-255 / R6).